The sequence spans 494 residues: UPF0371 protein str1377 (494 aa).

The protein belongs to the UPF0371 family.

The polypeptide is UPF0371 protein str1377 (Streptococcus thermophilus (strain CNRZ 1066)).